The primary structure comprises 467 residues: Asparagine--tRNA ligase (467 aa).

It belongs to the class-II aminoacyl-tRNA synthetase family. In terms of assembly, homodimer.

It localises to the cytoplasm. It catalyses the reaction tRNA(Asn) + L-asparagine + ATP = L-asparaginyl-tRNA(Asn) + AMP + diphosphate + H(+). The sequence is that of Asparagine--tRNA ligase from Histophilus somni (strain 2336) (Haemophilus somnus).